The chain runs to 512 residues: Tyrosine-protein kinase Lyn (512 aa).

The interval 1–62 is disordered; the sequence is MGCIKSKGKD…GQRFQTKDPE (62 aa). Residue Gly2 is the site of N-myristoyl glycine attachment. A lipid anchor (S-palmitoyl cysteine) is attached at Cys3. Phosphoserine is present on residues Ser11 and Ser13. The SH3 domain maps to 63 to 123; that stretch reads EQGDIVVALY…PSNYVAKLNT (61 aa). Positions 129 to 226 constitute an SH2 domain; the sequence is WFFKDITRKD…GLCRRLEKAC (98 aa). At Tyr193 the chain carries Phosphotyrosine. Residue Ser228 is modified to Phosphoserine. A Protein kinase domain is found at 247-501; sequence IKLVKRLGAG…YLQSVLDDFY (255 aa). Residues 253-261 and Lys275 each bind ATP; that span reads LGAGQFGEV. Phosphotyrosine occurs at positions 306 and 316. The active-site Proton acceptor is the Asp367. Tyr397 carries the post-translational modification Phosphotyrosine; by autocatalysis. Residues Tyr460 and Tyr473 each carry the phosphotyrosine modification. At Tyr508 the chain carries Phosphotyrosine; by autocatalysis, CSK and MATK.

This sequence belongs to the protein kinase superfamily. Tyr protein kinase family. SRC subfamily. In terms of assembly, interacts with TEC. Interacts (via SH2 domain) with FLT3 (tyrosine phosphorylated). Interacts with LIME1 and with CD79A upon activation of the B-cell antigen receptor. Interacts with the B-cell receptor complex. Interacts with phosphorylated THEMIS2. Interacts with EPOR. Interacts with MS4A2/FCER1B. Interaction (via the SH2 and SH3 domains) with MUC1 is stimulated by IL7 and the subsequent phosphorylation increases the binding between MUC1 and CTNNB1/beta-catenin. Interacts with ADAM15. Interacts with NDFIP2 and more weakly with NDFIP1. Interacts with FASLG. Interacts with KIT. Interacts with HCLS1. Interacts with FCGR2B. Interacts with FCGR1A; the interaction may be indirect. Interacts with CD19, CD22, CD79A and CD79B. Interacts (via SH3 domain) with CBLC, PPP1R15A and PDE4A. Interacts with TGFB1I1. Interacts (via SH3 domain) with PIK3R1, the regulatory subunit of phosphatidylinositol 3-kinase; this interaction enhances phosphatidylinositol 3-kinase activity. Interacts with CSF2RB, the common subunit of the IL3, IL5 and CSF2 receptors. Interacts with PAG1; identified in a complex with PAG1 and STAT3. Interacts with ABL1. Interacts with PTPN6/SHP-1. Interacts (via SH3 domain) with SCIMP (via proline-rich region). This interaction facilitates the phosphorylation of SCIMP on 'Tyr-107', which enhances binding of SCIMP to TLR4, and consequently the phosphorylation of TLR4 in response to stimulation by lipopolysaccharide in macrophages. Interacts with LPXN (via LD motif 3) and the interaction is induced upon B-cell antigen receptor (BCR) activation. Interacts (via SH3-domain) with ANKRD54 (via ankyrin repeat region) in an activation-independent status of LYN. Forms a multiprotein complex with ANKRD54 and HCLS1. Interacts (via SH2 and SH3 domains) with UNC119; leading to LYN activation. Interacts with CD36. Interacts with LYN. Interacts with SKAP1 and FYB1; this interaction promotes the phosphorylation of CLNK. Interacts with BCAR1/CAS and NEDD9/HEF1. As to quaternary structure, (Microbial infection) Interacts with Epstein-Barr virus LMP2A. (Microbial infection) Interacts with Herpes virus saimiri tyrosine kinase interacting protein (Tip). Ubiquitinated by CBL, leading to its degradation. Ubiquitination is SH3-dependent. Post-translationally, autophosphorylated. Phosphorylated on tyrosine residues in response to KIT signaling. Phosphorylation at Tyr-397 is required for optimal activity. Phosphorylation at Tyr-508 inhibits kinase activity. Phosphorylated at Tyr-508 by CSK. Dephosphorylated by PTPRC/CD45. Becomes rapidly phosphorylated upon activation of the B-cell receptor and the immunoglobulin receptor FCGR1A. Phosphorylated in response to ITGB1 in B-cells. Detected in monocytes (at protein level). Detected in placenta, and in fetal brain, lung, liver and kidney. Widely expressed in a variety of organs, tissues, and cell types such as epidermoid, hematopoietic, and neuronal cells. Expressed in primary neuroblastoma tumors.

Its subcellular location is the cell membrane. The protein resides in the nucleus. It is found in the cytoplasm. The protein localises to the perinuclear region. It localises to the golgi apparatus. Its subcellular location is the membrane. The catalysed reaction is L-tyrosyl-[protein] + ATP = O-phospho-L-tyrosyl-[protein] + ADP + H(+). Its activity is regulated as follows. Subject to autoinhibition, mediated by intramolecular interactions between the SH2 domain and the C-terminal phosphotyrosine. Phosphorylation at Tyr-397 is required for optimal activity. Phosphorylated by CSK at Tyr-508; phosphorylation at Tyr-508 inhibits kinase activity. Kinase activity is modulated by dephosphorylation by PTPRC/CD45. Inhibited by Dasatinib, PP2, and SU6656. In terms of biological role, non-receptor tyrosine-protein kinase that transmits signals from cell surface receptors and plays an important role in the regulation of innate and adaptive immune responses, hematopoiesis, responses to growth factors and cytokines, integrin signaling, but also responses to DNA damage and genotoxic agents. Functions primarily as negative regulator, but can also function as activator, depending on the context. Required for the initiation of the B-cell response, but also for its down-regulation and termination. Plays an important role in the regulation of B-cell differentiation, proliferation, survival and apoptosis, and is important for immune self-tolerance. Acts downstream of several immune receptors, including the B-cell receptor, CD79A, CD79B, CD5, CD19, CD22, FCER1, FCGR2, FCGR1A, TLR2 and TLR4. Plays a role in the inflammatory response to bacterial lipopolysaccharide. Mediates the responses to cytokines and growth factors in hematopoietic progenitors, platelets, erythrocytes, and in mature myeloid cells, such as dendritic cells, neutrophils and eosinophils. Acts downstream of EPOR, KIT, MPL, the chemokine receptor CXCR4, as well as the receptors for IL3, IL5 and CSF2. Plays an important role in integrin signaling. Regulates cell proliferation, survival, differentiation, migration, adhesion, degranulation, and cytokine release. Involved in the regulation of endothelial activation, neutrophil adhesion and transendothelial migration. Down-regulates signaling pathways by phosphorylation of immunoreceptor tyrosine-based inhibitory motifs (ITIM), that then serve as binding sites for phosphatases, such as PTPN6/SHP-1, PTPN11/SHP-2 and INPP5D/SHIP-1, that modulate signaling by dephosphorylation of kinases and their substrates. Phosphorylates LIME1 in response to CD22 activation. Phosphorylates BTK, CBL, CD5, CD19, CD72, CD79A, CD79B, CSF2RB, DOK1, HCLS1, LILRB3/PIR-B, MS4A2/FCER1B, SYK and TEC. Promotes phosphorylation of SIRPA, PTPN6/SHP-1, PTPN11/SHP-2 and INPP5D/SHIP-1. Mediates phosphorylation of the BCR-ABL fusion protein. Required for rapid phosphorylation of FER in response to FCER1 activation. Mediates KIT phosphorylation. Acts as an effector of EPOR (erythropoietin receptor) in controlling KIT expression and may play a role in erythroid differentiation during the switch between proliferation and maturation. Depending on the context, activates or inhibits several signaling cascades. Regulates phosphatidylinositol 3-kinase activity and AKT1 activation. Regulates activation of the MAP kinase signaling cascade, including activation of MAP2K1/MEK1, MAPK1/ERK2, MAPK3/ERK1, MAPK8/JNK1 and MAPK9/JNK2. Mediates activation of STAT5A and/or STAT5B. Phosphorylates LPXN on 'Tyr-72'. Kinase activity facilitates TLR4-TLR6 heterodimerization and signal initiation. Phosphorylates SCIMP on 'Tyr-107'; this enhances binding of SCIMP to TLR4, promoting the phosphorylation of TLR4, and a selective cytokine response to lipopolysaccharide in macrophages. Phosphorylates CLNK. Phosphorylates BCAR1/CAS and NEDD9/HEF1. The protein is Tyrosine-protein kinase Lyn (LYN) of Homo sapiens (Human).